The chain runs to 233 residues: 7-cyano-7-deazaguanine synthase (233 aa).

Residue 7-17 (CSGGLDSVSLA) participates in ATP binding. Zn(2+)-binding residues include C185, C193, C196, and C199.

This sequence belongs to the QueC family. Zn(2+) is required as a cofactor.

The catalysed reaction is 7-carboxy-7-deazaguanine + NH4(+) + ATP = 7-cyano-7-deazaguanine + ADP + phosphate + H2O + H(+). Its pathway is purine metabolism; 7-cyano-7-deazaguanine biosynthesis. Functionally, catalyzes the ATP-dependent conversion of 7-carboxy-7-deazaguanine (CDG) to 7-cyano-7-deazaguanine (preQ(0)). The polypeptide is 7-cyano-7-deazaguanine synthase (Ruegeria sp. (strain TM1040) (Silicibacter sp.)).